Here is a 503-residue protein sequence, read N- to C-terminus: UDP-N-acetylglucosamine--peptide N-acetylglucosaminyltransferase GtfA subunit (503 aa).

Residues 1–78 are N-terminus R-fold-1; that stretch reads MTIYNINLGI…FTDIKIAPTS (78 aa). Residue 16-19 coordinates UDP; it reads GVEY. Residues 79 to 195 form an extended beta-sheet domain region; that stretch reads VTVDDVLAYF…VYHFKDKIFY (117 aa). A C-terminus R-fold-1 region spans residues 196-306; it reads GKQAFVRAFM…QPKIVTIPVG (111 aa). Histidine 242 contributes to the N-acetyl-D-glucosamine binding site. The segment at 307–503 is R-fold-2; sequence SIDSLTDSSQ…KKTVEEVLHD (197 aa). Residue arginine 328 coordinates UDP. Position 332 (glutamate 332) interacts with N-acetyl-D-glucosamine. Residues lysine 333, glycine 358, and 384 to 385 each bind UDP; that span reads HA. Position 404-407 (404-407) interacts with N-acetyl-D-glucosamine; it reads EGFG. 408-412 provides a ligand contact to UDP; the sequence is LTLME.

The protein belongs to the glycosyltransferase group 1 family. Glycosyltransferase 4 subfamily. In terms of assembly, monomer. Interacts with stabilizing protein GtfB, probably as a heterotetramer with 2 subunits each of GtfA and GtfB, part of the accessory SecA2/SecY2 protein translocation apparatus.

The protein resides in the cytoplasm. It localises to the cell membrane. The catalysed reaction is L-seryl-[protein] + UDP-N-acetyl-alpha-D-glucosamine = 3-O-[N-acetyl-alpha-D-glucosaminyl]-L-seryl-[protein] + UDP + H(+). Its pathway is protein modification; protein glycosylation. Its function is as follows. Required for the polymorphic O-glycosylation of serine-rich repeat protein PsrP. Catalyzes the first step in glycosylation by transferring N-acetylglucosamine from UDP-GlcNAc to serine residues in PsrP. Part of the accessory SecA2/SecY2 system specifically required to export serine-rich repeat cell wall proteins encoded upstream in the same operon. The GtfA-GtfB complex adds GlcNAc from UDP-GlcNAc to PsrP (experimentally characterized with truncated PsrP-SSR1 constructs); this subunit alone has weak N-acetylglucosaminyl transferase activity that is 10-fold stimulated by GtfB. The complex requires at least a 25 residue-long peptide for activity; the in vitro assay has only been seen to glycosylate Ser residues. The alpha linkage was shown in L.reuteri. The sequence is that of UDP-N-acetylglucosamine--peptide N-acetylglucosaminyltransferase GtfA subunit from Streptococcus pneumoniae serotype 4 (strain ATCC BAA-334 / TIGR4).